The primary structure comprises 129 residues: UPF0102 protein Cag_1992 (129 aa).

The protein belongs to the UPF0102 family.

The polypeptide is UPF0102 protein Cag_1992 (Chlorobium chlorochromatii (strain CaD3)).